A 239-amino-acid polypeptide reads, in one-letter code: Phosphoglycolate phosphatase (239 aa).

The Nucleophile role is filled by D14. The Mg(2+) site is built by D14 and D16. K160 serves as a coordination point for substrate. D183 and D187 together coordinate Mg(2+).

It belongs to the archaeal SPP-like hydrolase family. Mg(2+) serves as cofactor.

The enzyme catalyses 2-phosphoglycolate + H2O = glycolate + phosphate. Catalyzes the dephosphorylation of 2-phosphoglycolate. The chain is Phosphoglycolate phosphatase from Aeropyrum pernix (strain ATCC 700893 / DSM 11879 / JCM 9820 / NBRC 100138 / K1).